Reading from the N-terminus, the 501-residue chain is Leukocyte receptor cluster member 9 (501 aa).

Disordered regions lie at residues 1 to 43 (MGSR…PAPP), 61 to 86 (RQPHPGAPAPPGREAQPEAGAKKPPL), 203 to 234 (GQEAQAAPKRGSTRPLCTGHQEPGVEEPGELE), and 281 to 300 (QALGVPGGSAETTEAEWGPA). The C3H1-type zinc-finger motif lies at 40–67 (PAPPPACRFFLEGRCRFGARCRQPHPGA).

The chain is Leukocyte receptor cluster member 9 (LENG9) from Homo sapiens (Human).